Reading from the N-terminus, the 230-residue chain is U2 small nuclear ribonucleoprotein A' (230 aa).

LRR repeat units lie at residues 15-36 (SLRN…NADT), 48-69 (GDRE…GVTE), 71-92 (HYTS…PRLE), 93-114 (TLRT…KNIA), and 115-136 (KLET…ESLK). Positions 149–187 (NPVQHVPRYRSYMISILPSLRMLDFQRVTQKERDEAEAM) constitute an LRRCT domain.

This sequence belongs to the U2 small nuclear ribonucleoprotein A family. Associated with the spliceosome.

It localises to the nucleus. Functionally, involved in pre-mRNA splicing. The polypeptide is U2 small nuclear ribonucleoprotein A' (LEA1) (Yarrowia lipolytica (strain CLIB 122 / E 150) (Yeast)).